The chain runs to 343 residues: Ubiquitin thioesterase OTU1 (343 aa).

Residues 45 to 123 form a UBX-like region; the sequence is RCKAKGGTHL…IVEEDQTRPK (79 aa). An OTU domain is found at 144-269; it reads LTRTAVPADN…GIHYDPLQRN (126 aa). The tract at residues 149–155 is cys-loop; the sequence is VPADNSC. The active site involves D152. The active-site Nucleophile is the C155. Residues 208–218 form a variable-loop region; sequence IRRDDTWGGAI. The tract at residues 258-262 is his-loop; sequence YDGIH. I261 contacts substrate. Residue H262 is part of the active site. The interval 286–291 is S2 site; it reads DIVLVQ. Residues 313–337 form a C2H2-type zinc finger; sequence LRCMICQKGLTGQAEARDHARETGH. Residue H337 is part of the active site.

Interacts with VCP; the interaction is direct. Interacts with FAF2/UBXD8. Interacts with DERL1; however interaction is dependent on the UBAX-like region, suggesting that it may be indirect. Interacts with PLAA, UBXN6 and VCP; may form a complex involved in macroautophagy.

Its subcellular location is the cytoplasm. The catalysed reaction is Thiol-dependent hydrolysis of ester, thioester, amide, peptide and isopeptide bonds formed by the C-terminal Gly of ubiquitin (a 76-residue protein attached to proteins as an intracellular targeting signal).. Its function is as follows. Hydrolase that can remove conjugated ubiquitin from proteins and participates in endoplasmic reticulum-associated degradation (ERAD) for misfolded lumenal proteins. May act by triming the ubiquitin chain on the associated substrate to facilitate their threading through the VCP/p97 pore. Ubiquitin moieties on substrates may present a steric impediment to the threading process when the substrate is transferred to the VCP pore and threaded through VCP's axial channel. Mediates deubiquitination of 'Lys-27'-, 'Lys-29'- and 'Lys-33'-linked polyubiquitin chains. Also able to hydrolyze 'Lys-11'-linked ubiquitin chains. Cleaves both polyubiquitin and di-ubiquitin. May play a role in macroautophagy, regulating for instance the clearance of damaged lysosomes. May recruit PLAA, UBXN6 and VCP to damaged lysosome membranes decorated with K48-linked ubiquitin chains and remove these chains allowing autophagosome formation. This is Ubiquitin thioesterase OTU1 (Yod1) from Mus musculus (Mouse).